The following is a 389-amino-acid chain: Homoserine O-acetyltransferase (389 aa).

The interval 1–21 (MAALRAGKTNNEADQPSSPVL) is disordered. Over residues 8–18 (KTNNEADQPSS) the composition is skewed to polar residues. Residues 56–366 (NAILVCHALT…DRGHDAFLLD (311 aa)) form the AB hydrolase-1 domain. The active-site Nucleophile is the Ser161. Residue Arg231 participates in substrate binding. Active-site residues include Asp327 and His360. A substrate-binding site is contributed by Asp361.

The protein belongs to the AB hydrolase superfamily. MetX family. In terms of assembly, homodimer.

Its subcellular location is the cytoplasm. The catalysed reaction is L-homoserine + acetyl-CoA = O-acetyl-L-homoserine + CoA. The protein operates within amino-acid biosynthesis; L-methionine biosynthesis via de novo pathway; O-acetyl-L-homoserine from L-homoserine: step 1/1. In terms of biological role, transfers an acetyl group from acetyl-CoA to L-homoserine, forming acetyl-L-homoserine. The chain is Homoserine O-acetyltransferase from Mesorhizobium japonicum (strain LMG 29417 / CECT 9101 / MAFF 303099) (Mesorhizobium loti (strain MAFF 303099)).